A 74-amino-acid polypeptide reads, in one-letter code: Defensin-like protein P322 (74 aa).

The signal sequence occupies residues Met-1–Met-19. 4 disulfide bridges follow: Cys-30-Cys-74, Cys-41-Cys-61, Cys-47-Cys-68, and Cys-51-Cys-70.

Belongs to the DEFL family. Protease inhibitor I18 (RTI/MTI-2) subfamily. Tuber.

It is found in the secreted. This is Defensin-like protein P322 from Solanum tuberosum (Potato).